Reading from the N-terminus, the 910-residue chain is Protein translocase subunit SecA (910 aa).

Residues Q86, 104-108, and D499 each bind ATP; that span reads GEGKT. Residues C894, C896, C905, and H906 each coordinate Zn(2+).

The protein belongs to the SecA family. Monomer and homodimer. Part of the essential Sec protein translocation apparatus which comprises SecA, SecYEG and auxiliary proteins SecDF-YajC and YidC. It depends on Zn(2+) as a cofactor.

Its subcellular location is the cell inner membrane. The protein localises to the cytoplasm. The catalysed reaction is ATP + H2O + cellular proteinSide 1 = ADP + phosphate + cellular proteinSide 2.. Its function is as follows. Part of the Sec protein translocase complex. Interacts with the SecYEG preprotein conducting channel. Has a central role in coupling the hydrolysis of ATP to the transfer of proteins into and across the cell membrane, serving both as a receptor for the preprotein-SecB complex and as an ATP-driven molecular motor driving the stepwise translocation of polypeptide chains across the membrane. In Rickettsia bellii (strain OSU 85-389), this protein is Protein translocase subunit SecA.